We begin with the raw amino-acid sequence, 311 residues long: Aspartate carbamoyltransferase catalytic subunit (311 aa).

2 residues coordinate carbamoyl phosphate: Arg55 and Thr56. Residue Lys83 coordinates L-aspartate. Arg105, His134, and Gln137 together coordinate carbamoyl phosphate. L-aspartate is bound by residues Arg167 and Arg226. Residues Gly267 and Pro268 each contribute to the carbamoyl phosphate site.

It belongs to the aspartate/ornithine carbamoyltransferase superfamily. ATCase family. In terms of assembly, heterododecamer (2C3:3R2) of six catalytic PyrB chains organized as two trimers (C3), and six regulatory PyrI chains organized as three dimers (R2).

It carries out the reaction carbamoyl phosphate + L-aspartate = N-carbamoyl-L-aspartate + phosphate + H(+). It functions in the pathway pyrimidine metabolism; UMP biosynthesis via de novo pathway; (S)-dihydroorotate from bicarbonate: step 2/3. Its function is as follows. Catalyzes the condensation of carbamoyl phosphate and aspartate to form carbamoyl aspartate and inorganic phosphate, the committed step in the de novo pyrimidine nucleotide biosynthesis pathway. The polypeptide is Aspartate carbamoyltransferase catalytic subunit (Corynebacterium jeikeium (strain K411)).